A 66-amino-acid polypeptide reads, in one-letter code: Large ribosomal subunit protein bL31 (66 aa).

The Zn(2+) site is built by cysteine 16, cysteine 18, cysteine 36, and cysteine 39.

Belongs to the bacterial ribosomal protein bL31 family. Type A subfamily. In terms of assembly, part of the 50S ribosomal subunit. It depends on Zn(2+) as a cofactor.

Binds the 23S rRNA. This Campylobacter jejuni subsp. jejuni serotype O:6 (strain 81116 / NCTC 11828) protein is Large ribosomal subunit protein bL31.